A 107-amino-acid chain; its full sequence is Large ribosomal subunit protein bL21 (107 aa).

This sequence belongs to the bacterial ribosomal protein bL21 family. In terms of assembly, part of the 50S ribosomal subunit. Contacts protein L20.

This protein binds to 23S rRNA in the presence of protein L20. This is Large ribosomal subunit protein bL21 from Buchnera aphidicola subsp. Schizaphis graminum (strain Sg).